Here is a 253-residue protein sequence, read N- to C-terminus: uncharacterized protein (253 aa).

Residues 62–78 traverse the membrane as a helical segment; sequence WCSIGWSIGALIIFLVY. Positions 141 to 158 are enriched in low complexity; it reads TTPQTTTPEIPSSTEPQE. The segment at 141–225 is disordered; the sequence is TTPQTTTPEI…HDNQPLEERH (85 aa). The span at 200 to 216 shows a compositional bias: acidic residues; sequence NVEDEPPPNKPEEEEDH.

The protein resides in the host membrane. This is an uncharacterized protein from Aedes vexans (Inland floodwater mosquito).